A 104-amino-acid polypeptide reads, in one-letter code: Large ribosomal subunit protein eL31 (104 aa).

Belongs to the eukaryotic ribosomal protein eL31 family.

In Aeropyrum pernix (strain ATCC 700893 / DSM 11879 / JCM 9820 / NBRC 100138 / K1), this protein is Large ribosomal subunit protein eL31 (rpl31e).